The primary structure comprises 386 residues: Chaperone protein DnaJ (386 aa).

The region spanning 5-69 is the J domain; the sequence is DLYDVLGVKK…QKRAQYDQFG (65 aa). A CR-type zinc finger spans residues 140-224; sequence GKETSIKYNR…CHGAGVTEER (85 aa). Cys153, Cys156, Cys170, Cys173, Cys196, Cys199, Cys212, and Cys215 together coordinate Zn(2+). CXXCXGXG motif repeat units lie at residues 153–160, 170–177, 196–203, and 212–219; these read CHTCHGSG, CSTCHGQG, CPTCGGKG, and CDTCHGAG.

Belongs to the DnaJ family. As to quaternary structure, homodimer. Requires Zn(2+) as cofactor.

It localises to the cytoplasm. Its function is as follows. Participates actively in the response to hyperosmotic and heat shock by preventing the aggregation of stress-denatured proteins and by disaggregating proteins, also in an autonomous, DnaK-independent fashion. Unfolded proteins bind initially to DnaJ; upon interaction with the DnaJ-bound protein, DnaK hydrolyzes its bound ATP, resulting in the formation of a stable complex. GrpE releases ADP from DnaK; ATP binding to DnaK triggers the release of the substrate protein, thus completing the reaction cycle. Several rounds of ATP-dependent interactions between DnaJ, DnaK and GrpE are required for fully efficient folding. Also involved, together with DnaK and GrpE, in the DNA replication of plasmids through activation of initiation proteins. The polypeptide is Chaperone protein DnaJ (Limosilactobacillus fermentum (strain NBRC 3956 / LMG 18251) (Lactobacillus fermentum)).